A 260-amino-acid chain; its full sequence is 3'-5' ssDNA/RNA exonuclease TatD (260 aa).

The a divalent metal cation site is built by Glu-91, His-127, and His-152.

Belongs to the metallo-dependent hydrolases superfamily. TatD-type hydrolase family. TatD subfamily. Monomer. Mg(2+) is required as a cofactor.

The protein resides in the cytoplasm. Functionally, 3'-5' exonuclease that prefers single-stranded DNA and RNA. May play a role in the H(2)O(2)-induced DNA damage repair. In Citrobacter koseri (strain ATCC BAA-895 / CDC 4225-83 / SGSC4696), this protein is 3'-5' ssDNA/RNA exonuclease TatD.